The primary structure comprises 294 residues: ATP phosphoribosyltransferase (294 aa).

This sequence belongs to the ATP phosphoribosyltransferase family. Long subfamily. The cofactor is Mg(2+).

The protein resides in the cytoplasm. It catalyses the reaction 1-(5-phospho-beta-D-ribosyl)-ATP + diphosphate = 5-phospho-alpha-D-ribose 1-diphosphate + ATP. Its pathway is amino-acid biosynthesis; L-histidine biosynthesis; L-histidine from 5-phospho-alpha-D-ribose 1-diphosphate: step 1/9. Its activity is regulated as follows. Feedback inhibited by histidine. Functionally, catalyzes the condensation of ATP and 5-phosphoribose 1-diphosphate to form N'-(5'-phosphoribosyl)-ATP (PR-ATP). Has a crucial role in the pathway because the rate of histidine biosynthesis seems to be controlled primarily by regulation of HisG enzymatic activity. The chain is ATP phosphoribosyltransferase from Chlorobium luteolum (strain DSM 273 / BCRC 81028 / 2530) (Pelodictyon luteolum).